The chain runs to 244 residues: Lytic polysaccharide monooxygenase-like protein ANIA_04702 (244 aa).

An N-terminal signal peptide occupies residues 1-23 (MLMSTSPSPWLAAAMLCIGLANA). Cu(2+) is bound at residue H24. H24 bears the Methylhistidine mark. 6 N-linked (GlcNAc...) asparagine glycosylation sites follow: N57, N80, N118, N159, N192, and N198. Intrachain disulfides connect C72–C177 and C142–C196. Residue N215 is the site of GPI-anchor amidated asparagine attachment. The propeptide at 216–244 (AGLEAVTVPSFLTAVVPTFLGIAYGLLMA) is removed in mature form.

The protein belongs to the X325 family. Cu(2+) serves as cofactor. The catalytically essential N-terminal histidine His-24 is post-translationally modified by methylation to prevent protonation of the histidine side chain, and protect the critical active site of the enzyme from oxidative damage.

Its subcellular location is the cell membrane. In terms of biological role, lytic polysaccharide monooxygenase-like protein that has diverged to biological functions other than polysaccharide degradation since it does not perform oxidative cleavage of polysaccharides. Acts as a cell surface-bound protein that functions in the copper-accumulation pathway. May also act as the major cell wall sensor that regulates MAP kinase-dependent hyphal anastomosis, the fusion of hyphal cells. In Emericella nidulans (strain FGSC A4 / ATCC 38163 / CBS 112.46 / NRRL 194 / M139) (Aspergillus nidulans), this protein is Lytic polysaccharide monooxygenase-like protein ANIA_04702.